The primary structure comprises 51 residues: Large ribosomal subunit protein eL39 (51 aa).

Positions Lys-32–Ala-51 are disordered.

The protein belongs to the eukaryotic ribosomal protein eL39 family.

The sequence is that of Large ribosomal subunit protein eL39 from Pyrobaculum calidifontis (strain DSM 21063 / JCM 11548 / VA1).